We begin with the raw amino-acid sequence, 91 residues long: Long neurotoxin OH-37 (91 aa).

A signal peptide spans 1 to 21; that stretch reads MKTLLLTLVVMTIVCLDLGYS. 5 disulfide bridges follow: C24–C41, C34–C62, C47–C51, C66–C77, and C78–C83.

This sequence belongs to the three-finger toxin family. Long-chain subfamily. Type II alpha-neurotoxin sub-subfamily. Expressed by the venom gland.

It is found in the secreted. In terms of biological role, binds with high affinity to muscular (alpha-1/CHRNA1) and neuronal (alpha-7/CHRNA7) nicotinic acetylcholine receptor (nAChR) and inhibits acetylcholine from binding to the receptor, thereby impairing neuromuscular and neuronal transmission. This is Long neurotoxin OH-37 from Ophiophagus hannah (King cobra).